Consider the following 345-residue polypeptide: S-adenosylmethionine:tRNA ribosyltransferase-isomerase (345 aa).

This sequence belongs to the QueA family. In terms of assembly, monomer.

The protein localises to the cytoplasm. The enzyme catalyses 7-aminomethyl-7-carbaguanosine(34) in tRNA + S-adenosyl-L-methionine = epoxyqueuosine(34) in tRNA + adenine + L-methionine + 2 H(+). Its pathway is tRNA modification; tRNA-queuosine biosynthesis. Its function is as follows. Transfers and isomerizes the ribose moiety from AdoMet to the 7-aminomethyl group of 7-deazaguanine (preQ1-tRNA) to give epoxyqueuosine (oQ-tRNA). The chain is S-adenosylmethionine:tRNA ribosyltransferase-isomerase from Anaeromyxobacter dehalogenans (strain 2CP-1 / ATCC BAA-258).